We begin with the raw amino-acid sequence, 389 residues long: Probable nitrate transporter NarT (389 aa).

12 helical membrane-spanning segments follow: residues 14 to 34 (TLSL…MPFI), 45 to 65 (ISII…PFGY), 69 to 89 (IVGA…PIFF), 97 to 117 (GMLM…SVGV), 139 to 159 (GNIG…IIGW), 161 to 181 (TTVR…FIFG), 211 to 231 (WYFI…NYLV), 246 to 266 (GVFI…GDKF), 268 to 288 (AVKV…ILGI), 294 to 314 (LFTV…GLIF), 331 to 351 (IVSM…TYVA), and 353 to 373 (LTGS…IALF).

The protein belongs to the major facilitator superfamily. Nitrate/nitrite porter (TC 2.A.1.8) family.

It is found in the cell membrane. In terms of biological role, probably required for nitrate uptake under anoxic conditions. Also possibly involved in excretion of nitrite produced by the dissimilatory reduction of nitrate. The chain is Probable nitrate transporter NarT (narT) from Staphylococcus aureus (strain JH9).